A 232-amino-acid chain; its full sequence is UPF0235 protein At5g63440 (232 aa).

The protein belongs to the UPF0235 family. As to quaternary structure, interacts with CTN.

The protein resides in the nucleus speckle. Functionally, may play a role during early embryonic development. Probably involved in pre-mRNA splicing. The chain is UPF0235 protein At5g63440 from Arabidopsis thaliana (Mouse-ear cress).